The following is a 349-amino-acid chain: Phloroglucinol synthase (349 aa).

Cys-138 is an active-site residue.

The protein belongs to the thiolase-like superfamily. Chalcone/stilbene synthases family.

It catalyses the reaction 3 malonyl-CoA + 3 H(+) = 1,3,5-trihydroxybenzene + 3 CO2 + 3 CoA. It functions in the pathway antibiotic biosynthesis. Its function is as follows. Type III polyketide synthase that catalyzes the synthesis of phloroglucinol from three molecules of malonyl-CoA. In addition to its ability to produce phloroglucinol from malonyl-CoA, it exhibits broad substrate specificity, accepting C4-C12 aliphatic acyl-CoAs and phenylacetyl-CoA as the starters to form C6-polyoxoalkylated alpha-pyrones from sequential condensation with malonyl-CoA. This Pseudomonas fluorescens (strain ATCC BAA-477 / NRRL B-23932 / Pf-5) protein is Phloroglucinol synthase.